The sequence spans 467 residues: Sialic acid-binding Ig-like lectin 12 (467 aa).

A signal peptide spans 1-18 (MLLLLLLLLLWGIKGVEG). Residues 19 to 353 (QNPQEVFTLN…ATLSEMMMGT (335 aa)) are Extracellular-facing. In terms of domain architecture, Ig-like V-type spans 21–141 (PQEVFTLNVE…TKYNYMWDKM (121 aa)). Intrachain disulfides connect cysteine 40–cysteine 176, cysteine 45–cysteine 108, and cysteine 170–cysteine 219. Residue asparagine 46 is glycosylated (N-linked (GlcNAc...) asparagine). Residue arginine 126 coordinates N-acetylneuraminate. Ig-like C2-type domains are found at residues 152-239 (PQIL…LNVS) and 242-339 (PKNL…LSLS). N-linked (GlcNAc...) asparagine glycosylation is found at asparagine 167, asparagine 197, asparagine 216, asparagine 227, asparagine 237, asparagine 244, asparagine 262, asparagine 287, and asparagine 294. Residues cysteine 278 and cysteine 323 are joined by a disulfide bond. The helical transmembrane segment at 354-374 (FVGSGVTALLFLSVCILLLAV) threads the bilayer. Over 375–467 (RSYRRKPARP…IKFPQRTAWP (93 aa)) the chain is Cytoplasmic. The ITIM motif signature appears at 430–435 (IHYATL). A phosphotyrosine mark is found at tyrosine 432 and tyrosine 455. The short motif at 453–458 (TEYSEI) is the SLAM-like motif element.

It belongs to the immunoglobulin superfamily. SIGLEC (sialic acid binding Ig-like lectin) family. Homodimer; disulfide-linked. Interacts with PTPN6/SHP-1 and PTPN11/SHP-2 upon phosphorylation. In terms of processing, phosphorylation of Tyr-432 is required for binding to PTPN6 and PTPN11. Phosphorylation of Tyr-455 is involved in binding to PTPN6. Tyr-432 needs to be phosphorylated prior to Tyr-455. In terms of tissue distribution, expressed by monocytic/myeloid lineage cells. Found at higher levels in spleen, liver and heart. Found at lower levels in kidney and lung.

It localises to the membrane. In terms of biological role, putative adhesion molecule that mediates sialic-acid dependent binding to cells. The sialic acid recognition site may be masked by cis interactions with sialic acids on the same cell surface. In the immune response, may act as an inhibitory receptor upon ligand induced tyrosine phosphorylation by recruiting cytoplasmic phosphatase(s) via their SH2 domain(s) that block signal transduction through dephosphorylation of signaling molecules. This is Sialic acid-binding Ig-like lectin 12 (Siglec12) from Mus musculus (Mouse).